The following is a 408-amino-acid chain: Putative gustatory receptor 58b (408 aa).

Over 1–44 (MLHPKLGRVMNVVYYHSVVFALMSTTLRIRSCRKCLRLEKVSRT) the chain is Cytoplasmic. Residues 45–65 (YTIYSFFVGIFLFLNLYFMVP) traverse the membrane as a helical segment. The Extracellular segment spans residues 66–82 (RIMEDGYMKYNIVLQWN). A helical transmembrane segment spans residues 83–103 (FFVMLFLRAIAVVSCYGTLWL). Residues 104 to 150 (KRHKIIQLYKYSLIYWKRFGHITRAIVDKKELLDLQESLARIMIRKI) lie on the Cytoplasmic side of the membrane. Residues 151-171 (ILLYSAFLCSTVLQYQLLSVI) form a helical membrane-spanning segment. The Extracellular segment spans residues 172–193 (NPQIFLAFCARLTHFLHFLCVK). The helical transmembrane segment at 194-214 (MGFFGVLVLLNHQFLVIHLAI) threads the bilayer. At 215-245 (NALHGRKARKKWKALRSVAAMHLKTLRLARR) the chain is on the cytoplasmic side. A helical membrane pass occupies residues 246-266 (IFDMFDIANATVFINMFMTAI). Topologically, residues 267–284 (NILYHAVQYSNSSIKSNG) are extracellular. Asn277 carries an N-linked (GlcNAc...) asparagine glycan. A helical membrane pass occupies residues 285–305 (WGILFGNGLIVFNFWGTMALM). The Cytoplasmic segment spans residues 306 to 364 (EMLDSVVTSCNNTGQQLRQLSDLPKVGPKMQRELDVFTMQLRQNRLVYKICGIVELDKP). Residues 365–385 (ACLSYIGSILSNVIILMQFDL) form a helical membrane-spanning segment. Topologically, residues 386-408 (RRQRQPINDRQYLIHLMKNKTKV) are extracellular. Asn404 is a glycosylation site (N-linked (GlcNAc...) asparagine).

It belongs to the insect chemoreceptor superfamily. Gustatory receptor (GR) family. Gr22e subfamily. In terms of tissue distribution, expressed in the adult labellar chemosensory neurons, labral sense organ and thorax. In larvae, is in neurons of the terminal external chemosensory organ as well as in the dorsal pharyngeal sense organ.

The protein resides in the cell membrane. Probable gustatory receptor which mediates acceptance or avoidance behavior, depending on its substrates. In Drosophila melanogaster (Fruit fly), this protein is Putative gustatory receptor 58b (Gr58b).